The primary structure comprises 600 residues: DDB1- and CUL4-associated factor 15 (600 aa).

Residues Met1 to Gly30 are disordered. Positions Ala13–Arg27 are enriched in gly residues. A Phosphoserine modification is found at Ser50. Zn(2+) is bound by residues Cys193, Cys196, Cys211, and His214. E7820 is bound by residues Phe231 and Ala234–Phe235. A compositionally biased stretch (pro residues) spans Pro280–Leu295. Positions Pro280–Ala316 are disordered. 2 positions are modified to phosphoserine: Ser310 and Ser314.

In terms of assembly, component of the DCX(DCAF15) complex, also named CLR4(DCAF15) complex, composed of DCAF15, DDB1, cullin-4 (CUL4A or CUL4B), DDA1 and RBX1.

Its pathway is protein modification; protein ubiquitination. With respect to regulation, aryl sulfonamide anticancer drugs change the substrate specificity of DCAF15 by acting as a molecular glue that promotes binding between DCAF15 and weak affinity interactors, such as RBM39. Functionally, substrate-recognition component of the DCX(DCAF15) complex, a cullin-4-RING E3 ubiquitin-protein ligase complex that mediates ubiquitination and degradation of target proteins. The DCX(DCAF15) complex acts as a regulator of the natural killer (NK) cells effector functions, possibly by mediating ubiquitination and degradation of cohesin subunits SMC1A and SMC3. May play a role in the activation of antigen-presenting cells (APC) and their interaction with NK cells. In terms of biological role, binding of aryl sulfonamide anticancer drugs, such as indisulam (E7070) or E7820, change the substrate specificity of the DCX(DCAF15) complex, leading to promote ubiquitination and degradation of splicing factor RBM39. RBM39 degradation results in splicing defects and death in cancer cell lines. Aryl sulfonamide anticancer drugs change the substrate specificity of DCAF15 by acting as a molecular glue that promotes binding between DCAF15 and weak affinity interactor RBM39. Aryl sulfonamide anticancer drugs also promote ubiquitination and degradation of RBM23 and PRPF39. The chain is DDB1- and CUL4-associated factor 15 from Homo sapiens (Human).